The following is a 560-amino-acid chain: Exonuclease subunit 2 (560 aa).

36–43 (GRNGGGKS) contacts ATP.

The protein to phage T5 protein D13 and to yeast RAD52. Consists of two subunits: gp46 and gp47.

Functionally, exonuclease that plays a role in viral genome replication, DNA recombination, and host DNA degradation. In Enterobacteria phage T4 (Bacteriophage T4), this protein is Exonuclease subunit 2 (46).